The following is a 120-amino-acid chain: Large ribosomal subunit protein bL12 (120 aa).

Positions 95-112 (KEGVSKEEAEEVQGKLEE) are enriched in basic and acidic residues. The interval 95-120 (KEGVSKEEAEEVQGKLEEAGASVEVK) is disordered.

This sequence belongs to the bacterial ribosomal protein bL12 family. In terms of assembly, homodimer. Part of the ribosomal stalk of the 50S ribosomal subunit. Forms a multimeric L10(L12)X complex, where L10 forms an elongated spine to which 2 to 4 L12 dimers bind in a sequential fashion. Binds GTP-bound translation factors.

Functionally, forms part of the ribosomal stalk which helps the ribosome interact with GTP-bound translation factors. Is thus essential for accurate translation. This chain is Large ribosomal subunit protein bL12, found in Oceanobacillus iheyensis (strain DSM 14371 / CIP 107618 / JCM 11309 / KCTC 3954 / HTE831).